Consider the following 475-residue polypeptide: Lactate utilization protein B (475 aa).

2 consecutive 4Fe-4S ferredoxin-type domains span residues 304-334 (GTEF…GHSY) and 353-382 (YDDY…LHEL). [4Fe-4S] cluster contacts are provided by Cys-313, Cys-316, Cys-319, Cys-323, Cys-366, Cys-369, and Cys-373.

This sequence belongs to the LutB/YkgF family.

Is involved in L-lactate degradation and allows cells to grow with lactate as the sole carbon source. Has probably a role as an electron transporter during oxidation of L-lactate. This chain is Lactate utilization protein B, found in Geobacillus sp. (strain WCH70).